The chain runs to 159 residues: Large ribosomal subunit protein uL11 (159 aa).

Belongs to the universal ribosomal protein uL11 family. As to quaternary structure, part of the ribosomal stalk of the 50S ribosomal subunit. Interacts with L10 and the large rRNA to form the base of the stalk. L10 forms an elongated spine to which L12 dimers bind in a sequential fashion forming a multimeric L10(L12)X complex.

Functionally, forms part of the ribosomal stalk which helps the ribosome interact with GTP-bound translation factors. This Methanococcus vannielii (strain ATCC 35089 / DSM 1224 / JCM 13029 / OCM 148 / SB) protein is Large ribosomal subunit protein uL11.